A 554-amino-acid chain; its full sequence is Wee1-like protein kinase 2-C (554 aa).

Disordered regions lie at residues 1-86 and 145-183; these read MRTA…GGEC and TLVN…SQMK. Composition is skewed to polar residues over residues 38 to 48 and 147 to 163; these read SPVSSWRTNNC and VNVN…THFQ. The Protein kinase domain maps to 213-487; the sequence is FLEIEKIGAG…AKNSVLRRCV (275 aa). Residues 219-227 and Lys242 each bind ATP; that span reads IGAGEFGSV. Asp340 (proton acceptor) is an active-site residue. Residues Asn345 and Asp377 each contribute to the Mg(2+) site. Residues 490-516 are a coiled coil; it reads AAELQKQLNVEKFKTAMLERELQAAKL.

The protein belongs to the protein kinase superfamily. Ser/Thr protein kinase family. WEE1 subfamily.

It is found in the nucleus. It catalyses the reaction L-tyrosyl-[protein] + ATP = O-phospho-L-tyrosyl-[protein] + ADP + H(+). In terms of biological role, protein tyrosine kinase that phosphorylates and inhibits cdk1 and acts as a regulator of meiosis in oocytes. Required to ensure the meiotic cell cycle in oocytes by phosphorylating cdk1 at 'Tyr-15', leading to inhibit cdk1 activity and prevent meiosis. This chain is Wee1-like protein kinase 2-C (wee2-c), found in Xenopus laevis (African clawed frog).